A 257-amino-acid chain; its full sequence is Pyridoxine 5'-phosphate synthase (257 aa).

Asn-16 contributes to the 3-amino-2-oxopropyl phosphate binding site. 18 to 19 (DH) is a 1-deoxy-D-xylulose 5-phosphate binding site. Arg-27 serves as a coordination point for 3-amino-2-oxopropyl phosphate. His-52 serves as the catalytic Proton acceptor. The 1-deoxy-D-xylulose 5-phosphate site is built by Arg-54 and His-59. Glu-79 acts as the Proton acceptor in catalysis. 1-deoxy-D-xylulose 5-phosphate is bound at residue Thr-109. The active-site Proton donor is His-200. 3-amino-2-oxopropyl phosphate contacts are provided by residues Gly-201 and 222–223 (GH).

The protein belongs to the PNP synthase family. As to quaternary structure, homooctamer; tetramer of dimers.

It localises to the cytoplasm. It catalyses the reaction 3-amino-2-oxopropyl phosphate + 1-deoxy-D-xylulose 5-phosphate = pyridoxine 5'-phosphate + phosphate + 2 H2O + H(+). It functions in the pathway cofactor biosynthesis; pyridoxine 5'-phosphate biosynthesis; pyridoxine 5'-phosphate from D-erythrose 4-phosphate: step 5/5. In terms of biological role, catalyzes the complicated ring closure reaction between the two acyclic compounds 1-deoxy-D-xylulose-5-phosphate (DXP) and 3-amino-2-oxopropyl phosphate (1-amino-acetone-3-phosphate or AAP) to form pyridoxine 5'-phosphate (PNP) and inorganic phosphate. This Burkholderia pseudomallei (strain 1710b) protein is Pyridoxine 5'-phosphate synthase.